The chain runs to 807 residues: Ribosome-releasing factor 2, mitochondrial (807 aa).

The transit peptide at 1 to 18 directs the protein to the mitochondrion; that stretch reads MFCRKYVFQTWKQLSRSY. In terms of domain architecture, tr-type G spans 27–315; that stretch reads AKTRNIGIIA…GITKYLPSPL (289 aa). GTP contacts are provided by residues 36–43, 100–104, and 154–157; these read AHIDAGKT, DTPGH, and NKMD.

It belongs to the TRAFAC class translation factor GTPase superfamily. Classic translation factor GTPase family. EF-G/EF-2 subfamily.

The protein localises to the mitochondrion. In terms of biological role, mitochondrial GTPase that mediates the disassembly of ribosomes from messenger RNA at the termination of mitochondrial protein biosynthesis. Not involved in the GTP-dependent ribosomal translocation step during translation elongation. This Candida albicans (strain SC5314 / ATCC MYA-2876) (Yeast) protein is Ribosome-releasing factor 2, mitochondrial.